The following is a 213-amino-acid chain: MRTSSFLDRLIGEVDSALRTLVLPQKRITTRQSPAENLADTVLSAQEKKHISGLMRVNHAGEVCAQALYQGQALTARLTHIKEQMASAAAEEVDHLAWCEERLYELGSKPSLLNPIWYCGSVLLGALAGLAGDKVSLGFVAETERQVTAHLQRHLHYLPEKDKKTIAILKRMQEDEEHHAHTAMEAGAVELPYIIKQLMNAVSKLMTQSSYYI.

The Fe cation site is built by glutamate 62, glutamate 92, histidine 95, glutamate 144, glutamate 176, and histidine 179.

It belongs to the COQ7 family. The cofactor is Fe cation.

The protein resides in the cell membrane. It catalyses the reaction a 5-methoxy-2-methyl-3-(all-trans-polyprenyl)benzene-1,4-diol + AH2 + O2 = a 3-demethylubiquinol + A + H2O. Its pathway is cofactor biosynthesis; ubiquinone biosynthesis. Functionally, catalyzes the hydroxylation of 2-nonaprenyl-3-methyl-6-methoxy-1,4-benzoquinol during ubiquinone biosynthesis. The chain is 3-demethoxyubiquinol 3-hydroxylase from Legionella pneumophila subsp. pneumophila (strain Philadelphia 1 / ATCC 33152 / DSM 7513).